The primary structure comprises 742 residues: MSEAQAPLITEEAAERGLASSGSRRLSDGGGGQGSRKYRRRSDALAHGDRYQKAAALVDLAEDGVGIPEDVLNDTRFGRAMSFYFVYLRLDWLWSLNIFALILLNFLEKPLWCRKDALHACDQRDMYFLGQLPYFSKTESLIYEGLTLVILVMEILCPLSYEGLNIFWRSTTNKLKILLLFILACDILVFAFSSQPFRLAPYIRVVFLIMTIRELRMCAITLAGLIGTYLNVLALSLLFLLFASWLAYVTFEDTPQGKTIFSSYGVTLYQMFVLFTTSNNPDVWVPAYKISRWYSLFFIVYVLLGVYFLTNLILAVIYDSFKEQFAKQLVQVDAIRKNILQKAFELIDTNTRGYLDREQCISLLNELNKYRSLPKTSREDFELIFAELDRSGDFKVTSEEFADLCNTIAIKFQKEPPPSYLEKFPFYHSPVCGRLKSFVRSRTFEYIIVFVLLINLVAVIIETTLDIENSSSQETWQEVEFFLGWIYVAEMALKIFSLGFGAYWMEGQNKFDFVLTWTIFIGETLTFAFPSKLPFLSNGEWIRYLLLGRVLRLTRILLQVQRFRVFVATFFTLMSSLMPYLGIVFCILCMYCSLGLQIFGGIVYAGNPTLEETDLFSNDYLLFNFNDYPSGMVTLFNLLVMGNWQVWMESYWQLTGSSWSLIYFVSFYLISILLLLNLIVAFVLEAFFAEMELEKGEEVDIQSPTSGGIKKRRSMRVRSKGTMVDILLHHMLSNELDGSQNS.

A disordered region spans residues 1 to 44 (MSEAQAPLITEEAAERGLASSGSRRLSDGGGGQGSRKYRRRSDA). Residues 1-82 (MSEAQAPLIT…NDTRFGRAMS (82 aa)) are Cytoplasmic-facing. A helical transmembrane segment spans residues 83 to 103 (FYFVYLRLDWLWSLNIFALIL). The Extracellular segment spans residues 104-140 (LNFLEKPLWCRKDALHACDQRDMYFLGQLPYFSKTES). Residues 141–161 (LIYEGLTLVILVMEILCPLSY) traverse the membrane as a helical segment. Residues 162–176 (EGLNIFWRSTTNKLK) lie on the Cytoplasmic side of the membrane. A helical transmembrane segment spans residues 177-197 (ILLLFILACDILVFAFSSQPF). Residues 198-204 (RLAPYIR) lie on the Extracellular side of the membrane. Residues 205-226 (VVFLIMTIRELRMCAITLAGLI) traverse the membrane as a helical; Voltage-sensor segment. The helical transmembrane segment at 227 to 247 (GTYLNVLALSLLFLLFASWLA) threads the bilayer. At 248–258 (YVTFEDTPQGK) the chain is on the extracellular side. The segment at residues 259–273 (TIFSSYGVTLYQMFV) is an intramembrane region (pore-forming). Residues 274–296 (LFTTSNNPDVWVPAYKISRWYSL) lie on the Extracellular side of the membrane. Residues 297–317 (FFIVYVLLGVYFLTNLILAVI) form a helical membrane-spanning segment. Over 318–446 (YDSFKEQFAK…SFVRSRTFEY (129 aa)) the chain is Cytoplasmic. EF-hand domains are found at residues 335-370 (IRKN…LNKY) and 376-411 (TSRE…IAIK). Residues 447 to 467 (IIVFVLLINLVAVIIETTLDI) traverse the membrane as a helical segment. Over 468-480 (ENSSSQETWQEVE) the chain is Extracellular. Residue asparagine 469 is glycosylated (N-linked (GlcNAc...) asparagine). Residues 481-501 (FFLGWIYVAEMALKIFSLGFG) form a helical membrane-spanning segment. Residues 502–510 (AYWMEGQNK) lie on the Cytoplasmic side of the membrane. Residues 511 to 531 (FDFVLTWTIFIGETLTFAFPS) traverse the membrane as a helical segment. The Extracellular portion of the chain corresponds to 532–540 (KLPFLSNGE). A helical; Voltage-sensor membrane pass occupies residues 541–558 (WIRYLLLGRVLRLTRILL). At 559–582 (QVQRFRVFVATFFTLMSSLMPYLG) the chain is on the cytoplasmic side. Residues 583–603 (IVFCILCMYCSLGLQIFGGIV) form a helical membrane-spanning segment. Residues 604–627 (YAGNPTLEETDLFSNDYLLFNFND) are Extracellular-facing. An intramembrane region (pore-forming) is located at residues 628-642 (YPSGMVTLFNLLVMG). Over 643–663 (NWQVWMESYWQLTGSSWSLIY) the chain is Extracellular. Residues 664–684 (FVSFYLISILLLLNLIVAFVL) form a helical membrane-spanning segment. The Cytoplasmic portion of the chain corresponds to 685-742 (EAFFAEMELEKGEEVDIQSPTSGGIKKRRSMRVRSKGTMVDILLHHMLSNELDGSQNS).

Belongs to the calcium channel alpha-1 subunit (TC 1.A.1.11) family. Two pore calcium channel subfamily. As to quaternary structure, homodimer.

The protein localises to the membrane. Inhibited by Al(3+). Functions as a voltage-gated inward-rectifying Ca(2+) channel (VDCC) across the plasma membrane that mediates sucrose-induced Ca(2+) influx in autotrophically grown leaf cells. Acts as the major ROS-responsive Ca(2+) channel and is the possible target of Al-dependent inhibition. Plays a regulatory role in defense responses. The chain is Two pore calcium channel protein 1 (TPC1) from Hordeum vulgare (Barley).